The chain runs to 247 residues: Inhibitory synaptic factor 1 (247 aa).

Positions 30-65 (RAVIGQLEGILRDLKEVAKELKEVVEQIDRLTSDFE) form a coiled coil. Disordered regions lie at residues 69–90 (DTDDWTPGTVSSTSSSEKGGPL), 112–166 (ASTP…RDRV), and 180–217 (DDSEDPPYGQETPRDPPRATAPCAVMKSKPGGLTGVRK). Positions 76–85 (GTVSSTSSSE) are enriched in polar residues.

It belongs to the INSYN1 family.

Its subcellular location is the postsynaptic density. May be a component of the protein machinery at the inhibitory synapses, probably acting as a scaffold. The sequence is that of Inhibitory synaptic factor 1 from Xenopus laevis (African clawed frog).